Consider the following 452-residue polypeptide: Phosphatidylserine synthase 2 (452 aa).

Over 1 to 35 the chain is Cytoplasmic; it reads MAKGEWKRSGADDLPLPGRSECEVFDDGTNTFFWR. The chain crosses the membrane as a helical span at residues 36–56; sequence AHTVTVLFILTCALVYVTLLE. Topologically, residues 57–69 are lumenal; it reads ETPHDTAYNTKRG. The helical transmembrane segment at 70–90 threads the bilayer; sequence IVASILVFLCFGVTQAKDGPF. The Cytoplasmic segment spans residues 91–99; sequence TRPHPAYWR. A helical membrane pass occupies residues 100 to 120; it reads FWLCVSVVYELFLIFILFQTV. The Lumenal segment spans residues 121-286; the sequence is HDGRQFMKYI…EWRPASNLRR (166 aa). The chain crosses the membrane as a helical span at residues 287–307; it reads WLAVLGIIFMFLLAELNTFYL. Residue Lys-308 is a topological domain, cytoplasmic. A helical membrane pass occupies residues 309–329; sequence FVMWMPPEHYLVLFRLVFFVN. The Lumenal portion of the chain corresponds to 330–349; sequence VGGVAMREIYDFMDDPKFHK. The chain crosses the membrane as a helical span at residues 350–370; sequence KLGQQAWIVAAITVTEFLIVV. Residues 371-376 lie on the Cytoplasmic side of the membrane; sequence KYDPNT. A helical transmembrane segment spans residues 377-397; it reads IMLPIPFFITQCWILGIALIL. Over 398-452 the chain is Lumenal; that stretch reads VWTLWRFFIRDITLRYKETRRRRQEVSSERDGSSSAPSGRSKLNGSMDSVRHRKS. Residues 419 to 452 form a disordered region; sequence RRQEVSSERDGSSSAPSGRSKLNGSMDSVRHRKS. Polar residues predominate over residues 430 to 444; sequence SSSAPSGRSKLNGSM.

Belongs to the phosphatidyl serine synthase family.

The protein resides in the endoplasmic reticulum membrane. The catalysed reaction is a 1,2-diacyl-sn-glycero-3-phosphoethanolamine + L-serine = a 1,2-diacyl-sn-glycero-3-phospho-L-serine + ethanolamine. It catalyses the reaction 1-hexadecanoyl-2-(9Z-octadecenoyl)-sn-glycero-3-phosphoethanolamine + L-serine = 1-hexadecanoyl-2-(9Z-octadecenoyl)-sn-glycero-3-phospho-L-serine + ethanolamine. The enzyme catalyses 1-hexadecanoyl-2-(4Z,7Z,10Z,13Z,16Z,19Z-docosahexaenoyl)-sn-glycero-3-phosphoethanolamine + L-serine = 1-hexadecanoyl-2-(4Z,7Z,10Z,13Z,16Z,19Z-docosahexaenoyl)-sn-glycero-3-phosphoserine + ethanolamine. It carries out the reaction 1-octadecanoyl-2-(5Z,8Z,11Z,14Z)-eicosatetraenoyl-sn-glycero-3-phosphoethanolamine + L-serine = 1-octadecanoyl-2-(5Z,8Z,11Z,14Z)-eicosatetraenoyl-sn-glycero-3-phosphoserine + ethanolamine. The catalysed reaction is 1-octadecanoyl-2-(4Z,7Z,10Z,13Z,16Z,19Z-docosahexaenoyl)-sn-glycero-3-phosphoethanolamine + L-serine = 1-octadecanoyl-2-(4Z,7Z,10Z,13Z,16Z,19Z-docosahexaenoyl)-sn-glycero-3-phosphoserine + ethanolamine. It catalyses the reaction 1-(1Z-octadecenyl)-2-(4Z,7Z,10Z,13Z,16Z,19Z-docosahexaenoyl)-sn-glycero-3-phosphoethanolamine + L-serine = 1-(1Z-octadecenyl)-2-(4Z,7Z,10Z,13Z,16Z,19Z-docosahexaenoyl)-sn-glycero-3-phospho-L-serine + ethanolamine. The enzyme catalyses 1-octadecanoyl-2-(9Z-octadecenoyl)-sn-glycero-3-phosphoethanolamine + L-serine = 1-octadecanoyl-2-(9Z-octadecenoyl)-sn-glycero-3-phospho-L-serine + ethanolamine. It carries out the reaction 1-(1Z-octadecenyl)-2-(9Z-octadecenoyl)-sn-glycero-3-phosphoethanolamine + L-serine = 1-(1Z-octadecenyl)-2-(9Z-octadecenoyl)-sn-glycero-3-phospho-L-serine + ethanolamine. The catalysed reaction is 1-(1Z-octadecenyl)-2-(5Z,8Z,11Z,14Z- eicosatetraenoyl)-sn-glycero-3-phosphoethanolamine + L-serine = 1-(1Z-octadecenyl)-2-(5Z,8Z,11Z,14Z-eicosatetraenoyl)-sn-glycero-3-phospho-L-serine + ethanolamine. It participates in phospholipid metabolism; phosphatidylserine biosynthesis. Catalyzes a base-exchange reaction in which the polar head group of phosphatidylethanolamine (PE) or phosphatidylcholine (PC) is replaced by L-serine. Catalyzes the conversion of phosphatatidylethanolamine and does not act on phosphatidylcholine. Can utilize both phosphatidylethanolamine (PE) plasmalogen and diacyl PE as substrate and the latter is six times better utilized, indicating the importance of an ester linkage at the sn-1 position. Although it shows no sn-1 fatty acyl preference, exhibits significant preference towards docosahexaenoic acid (22:6n-3) compared with 18:1 or 20:4 at the sn-2 position. The polypeptide is Phosphatidylserine synthase 2 (ptdss2) (Danio rerio (Zebrafish)).